Here is a 445-residue protein sequence, read N- to C-terminus: Phosphoglucosamine mutase (445 aa).

Catalysis depends on S102, which acts as the Phosphoserine intermediate. Positions 102, 241, 243, and 245 each coordinate Mg(2+). The residue at position 102 (S102) is a Phosphoserine.

It belongs to the phosphohexose mutase family. Mg(2+) is required as a cofactor. Post-translationally, activated by phosphorylation.

The enzyme catalyses alpha-D-glucosamine 1-phosphate = D-glucosamine 6-phosphate. In terms of biological role, catalyzes the conversion of glucosamine-6-phosphate to glucosamine-1-phosphate. The protein is Phosphoglucosamine mutase of Salmonella choleraesuis (strain SC-B67).